A 134-amino-acid polypeptide reads, in one-letter code: UPF0412 protein YaaI (134 aa).

The N-terminal stretch at 1-23 is a signal peptide; it reads MKSVFTISASLAISLMLCCTAQA.

Belongs to the UPF0412 family.

The sequence is that of UPF0412 protein YaaI from Escherichia coli (strain K12).